Consider the following 66-residue polypeptide: MPKMKTHRGAAKRFKKTGTGKLKRGHAYTSHLFANKTQKQKRKLRKATLVSPGDFKRIRQLLDNLK.

The span at 1 to 26 (MPKMKTHRGAAKRFKKTGTGKLKRGH) shows a compositional bias: basic residues. A disordered region spans residues 1-48 (MPKMKTHRGAAKRFKKTGTGKLKRGHAYTSHLFANKTQKQKRKLRKAT).

This sequence belongs to the bacterial ribosomal protein bL35 family.

The protein is Large ribosomal subunit protein bL35 of Geobacillus sp. (strain WCH70).